The following is a 350-amino-acid chain: 3-methylornithine synthase (350 aa).

One can recognise a Radical SAM core domain in the interval 57-279 (NRVFLNCFIY…PKRLIPASLD (223 aa)). Positions 71 and 75 each coordinate [4Fe-4S] cluster. Phe77 lines the S-adenosyl-L-methionine pocket. Cys78 contacts [4Fe-4S] cluster. 3 residues coordinate (3R)-3-methyl-D-ornithine: Asp112, Ser146, and Tyr169. S-adenosyl-L-methionine-binding residues include Glu171, Arg182, and Arg190. Arg235 lines the (3R)-3-methyl-D-ornithine pocket. Leu240 and Gln242 together coordinate S-adenosyl-L-methionine. Residues Ser277, Thr298, and Ser299 each coordinate (3R)-3-methyl-D-ornithine.

Belongs to the radical SAM superfamily. PylB family. [4Fe-4S] cluster serves as cofactor. Requires S-adenosyl-L-methionine as cofactor.

It catalyses the reaction L-lysine = (3R)-3-methyl-D-ornithine. It participates in amino-acid biosynthesis; L-pyrrolysine biosynthesis. Catalyzes the isomerization of L-lysine to (3R)-3-methyl-D-ornithine via a radical-based mechanism, a step in the biosynthesis pathway of pyrrolysine. Also catalyzes the reverse reaction in vitro, converting (3R)-3-methyl-D-ornithine into L-lysine. This is 3-methylornithine synthase from Methanosarcina barkeri (strain Fusaro / DSM 804).